Reading from the N-terminus, the 382-residue chain is GDP-mannose 4,6 dehydratase 2 (382 aa).

Residues 40–45 (GITGQD), 97–98 (DM), 119–123 (LAAQS), and tyrosine 134 contribute to the NADP(+) site. Threonine 166 is a catalytic residue. Catalysis depends on nucleophile residues glutamate 168 and tyrosine 190. Positions 194, 220, and 225 each coordinate NADP(+).

The protein belongs to the NAD(P)-dependent epimerase/dehydratase family. GDP-mannose 4,6-dehydratase subfamily. NADP(+) serves as cofactor.

The catalysed reaction is GDP-alpha-D-mannose = GDP-4-dehydro-alpha-D-rhamnose + H2O. It functions in the pathway nucleotide-sugar biosynthesis; GDP-L-fucose biosynthesis via de novo pathway; GDP-L-fucose from GDP-alpha-D-mannose: step 1/2. Its function is as follows. Catalyzes the conversion of GDP-D-mannose to GDP-4-dehydro-6-deoxy-D-mannose. This Caenorhabditis elegans protein is GDP-mannose 4,6 dehydratase 2 (gmd-2).